The sequence spans 414 residues: Phosphoglycerate kinase (414 aa).

Substrate is bound by residues 19 to 21 (DLN), Arg34, 57 to 60 (HQSK), Arg114, and Arg154. ATP is bound by residues Glu332 and 358 to 361 (GGHS).

This sequence belongs to the phosphoglycerate kinase family. As to quaternary structure, monomer.

Its subcellular location is the cytoplasm. The enzyme catalyses (2R)-3-phosphoglycerate + ATP = (2R)-3-phospho-glyceroyl phosphate + ADP. Its pathway is carbohydrate degradation; glycolysis; pyruvate from D-glyceraldehyde 3-phosphate: step 2/5. The sequence is that of Phosphoglycerate kinase from Thermococcus onnurineus (strain NA1).